A 724-amino-acid polypeptide reads, in one-letter code: Aquaglyceroporin-4 (724 aa).

Disordered regions lie at residues 1 to 167, 248 to 267, and 302 to 396; these read MADE…SIRR, INMA…NQAD, and AHGL…DLDG. Topologically, residues 1–434 are cytoplasmic; sequence MADEEIKPTS…VIRLRFREPL (434 aa). Over residues 87–96 the composition is skewed to polar residues; that stretch reads LTGQVPQDND. The segment covering 252-265 has biased composition (low complexity); that stretch reads QQQQQQQQQQPQNQ. 2 stretches are compositionally biased toward polar residues: residues 307 to 325 and 360 to 370; these read SPTN…TAPS and PSQTSQNSQNE. A helical membrane pass occupies residues 435–455; it reads AELLAVTCQLTLGFCADLVVV. The Extracellular segment spans residues 456 to 472; sequence TSGKNASPAGNEATTDW. A helical membrane pass occupies residues 473–493; sequence AWGLASMLGIYIAGGISGAHL. Residues 494–496 carry the NPA 1 motif; that stretch reads NPA. Residues 494-513 lie on the Cytoplasmic side of the membrane; that stretch reads NPAISIMLWIYRGFPLRKVP. A helical transmembrane segment spans residues 514–534; the sequence is MYVLAQILGAFIAALISFGLY. Over 535 to 567 the chain is Extracellular; that stretch reads QTNIVEYGGTDLKTSDTMGAFITYPRYPWINAS. A glycan (N-linked (GlcNAc...) asparagine) is linked at Asn565. A helical transmembrane segment spans residues 568 to 588; sequence TSFFTEFVGTAILAVAVLALG. At 589–595 the chain is on the cytoplasmic side; it reads DDMNAPP. A helical transmembrane segment spans residues 596-616; sequence GAGMSAFILGLVITVLSMAFG. Residues 617-647 lie on the Extracellular side of the membrane; the sequence is YNTGAALNPSRDLGPRLALAALGYGKDLFTD. Residues 624 to 626 carry the NPA 2 motif; it reads NPS. The chain crosses the membrane as a helical span at residues 648 to 668; that stretch reads VYWIWGNWCAPILGAIFGAFL. Over 669 to 724 the chain is Cytoplasmic; the sequence is YDAAIFAGGESPVNYPRKRIKRAGHKWRKKWGVRLRKMKPAKKGEDEAYRRWKESQ.

This sequence belongs to the MIP/aquaporin (TC 1.A.8) family.

It localises to the membrane. It carries out the reaction H2O(in) = H2O(out). It catalyses the reaction glycerol(in) = glycerol(out). Its function is as follows. Water channel required to facilitate the transport of water across membranes. May play a role in the vegetative growth. The polypeptide is Aquaglyceroporin-4 (Botryotinia fuckeliana (strain B05.10) (Noble rot fungus)).